A 455-amino-acid polypeptide reads, in one-letter code: Ammonium transporter Rh type B (455 aa).

Residues 1 to 10 (MARVPRHRRL) lie on the Cytoplasmic side of the membrane. The chain crosses the membrane as a helical span at residues 11 to 31 (VLPLLCLLFQGATALLFAIFV). Topologically, residues 32-58 (RYNHETDAALWHWGNHSNVDNEFYFRY) are extracellular. The N-linked (GlcNAc...) asparagine glycan is linked to N46. Residues 59–79 (PSFQDVHVMVFVGFGFLMVFL) traverse the membrane as a helical segment. Over 80–83 (QRYG) the chain is Cytoplasmic. The helical transmembrane segment at 84–104 (FSSVGFTFLVASLTLQWATLL) threads the bilayer. The Extracellular segment spans residues 105–121 (QGFLHSFHGGHIHVGVE). The helical transmembrane segment at 122–142 (SLINADFCAGAVLISFGAVLG) threads the bilayer. Topologically, residues 143–146 (KTGP) are cytoplasmic. The helical transmembrane segment at 147–167 (AQLLLMALLEAVLFSVNEFIL) threads the bilayer. The Extracellular portion of the chain corresponds to 168-175 (LSLLGVRD). The helical transmembrane segment at 176–198 (AGGSMTIHTFGAYFGLFLSWVLY) threads the bilayer. Residues 199-216 (RSQLEKSRHRQSSVYNSD) lie on the Cytoplasmic side of the membrane. The chain crosses the membrane as a helical span at residues 217–237 (LFAMIGTIFLWVFWPSFNSAP). Over 238-248 (TALGDGQHRTV) the chain is Extracellular. A helical transmembrane segment spans residues 249–269 (VNTYYSLTASTLSTFALSALV). Residues 270–279 (SGDGRLDMVH) are Cytoplasmic-facing. A helical membrane pass occupies residues 280–300 (VQNAALAGGVVVGTSSEMMLT). P301 is a topological domain (extracellular). The chain crosses the membrane as a helical span at residues 302 to 322 (FGALAAGFLAGTVSTLGYKFF). Residues 323–343 (TPILESRFKLQDTCGVHNLHG) lie on the Cytoplasmic side of the membrane. Residues 344 to 364 (MPGVLGAILGVVVAALATHEA) traverse the membrane as a helical segment. At 365 to 390 (YGDGLQSVFPLIAKGQRSATSQAVYQ) the chain is on the extracellular side. A helical membrane pass occupies residues 391-411 (LFGMFVTLVFASVGGSLGGLL). Topologically, residues 412 to 455 (LRLPFLDSPPDSQCFEDQVYWEVPGEQETETQRPLRGGESDTRA) are cytoplasmic. Positions 413–421 (RLPFLDSPP) are interaction with ANK3. The tract at residues 434–455 (VPGEQETETQRPLRGGESDTRA) is disordered. The span at 441-455 (ETQRPLRGGESDTRA) shows a compositional bias: basic and acidic residues.

This sequence belongs to the ammonium transporter (TC 2.A.49) family. Rh subfamily. Interacts (via C-terminus) with ANK2 and ANK3; required for targeting to the basolateral membrane. N-glycosylated. In terms of tissue distribution, expressed in kidney by connecting segments and collecting tubules. Also expressed in liver by perivenous hepatocytes. Expressed in the forestomach and the fundus of the stomach. Expressed in duodenum, jejunum, ileum and colon at the level of villous (at protein level). Specifically expressed in kidney where it is restricted to the epithelial linings of the convoluted tubules and the loop of Henle. Also detected in ovary. Expressed by hepatocytes and dermal hair follicles and papillae.

It is found in the cell membrane. The protein resides in the basolateral cell membrane. The catalysed reaction is NH4(+)(in) = NH4(+)(out). The enzyme catalyses methylamine(out) = methylamine(in). It carries out the reaction CO2(out) = CO2(in). Its activity is regulated as follows. Inhibited by amiloride. Functionally, ammonium transporter involved in the maintenance of acid-base homeostasis. Transports ammonium and its related derivative methylammonium across the basolateral plasma membrane of epithelial cells likely contributing to renal transepithelial ammonia transport and ammonia metabolism. May transport either NH4(+) or NH3 ammonia species predominantly mediating an electrogenic NH4(+) transport. May act as a CO2 channel providing for renal acid secretion. The chain is Ammonium transporter Rh type B (Rhbg) from Mus musculus (Mouse).